Reading from the N-terminus, the 708-residue chain is Polyribonucleotide nucleotidyltransferase (708 aa).

Mg(2+) contacts are provided by D485 and D491. The KH domain maps to 552-611; that stretch reads PKTYIMSIPPDKIRDVIGSGGKVINKIIAETGVKIDIKEDGKIFVMSEDSEGAKKALKII. The S1 motif domain occupies 621-689; sequence GEIYLGKVTK…NQGRINLSRK (69 aa). Residues 689–708 are disordered; the sequence is KDAIKDSEKKEQNEKDVQKK.

It belongs to the polyribonucleotide nucleotidyltransferase family. Mg(2+) serves as cofactor.

The protein resides in the cytoplasm. The enzyme catalyses RNA(n+1) + phosphate = RNA(n) + a ribonucleoside 5'-diphosphate. Functionally, involved in mRNA degradation. Catalyzes the phosphorolysis of single-stranded polyribonucleotides processively in the 3'- to 5'-direction. The chain is Polyribonucleotide nucleotidyltransferase from Clostridium kluyveri (strain NBRC 12016).